Here is a 108-residue protein sequence, read N- to C-terminus: Large ribosomal subunit protein P2A (108 aa).

The segment at 62–108 is disordered; that stretch reads LSSVPSGAPAAAAGGASAAAGGEATEEAAEEEAAEESDDDMSFGLFD. Low complexity predominate over residues 68-84; the sequence is GAPAAAAGGASAAAGGE. Residues 85–102 are compositionally biased toward acidic residues; it reads ATEEAAEEEAAEESDDDM. At S98 the chain carries Phosphoserine.

The protein belongs to the eukaryotic ribosomal protein P1/P2 family.

Plays an important role in the elongation step of protein synthesis. The chain is Large ribosomal subunit protein P2A (RPP2A) from Candida albicans (Yeast).